Consider the following 278-residue polypeptide: HTH-type transcriptional activator RhaS (278 aa).

Residues 174 to 272 enclose the HTH araC/xylS-type domain; sequence NLLLAWLEDH…NWSPRDIRQG (99 aa). 2 DNA-binding regions (H-T-H motif) span residues 191–212 and 239–262; these read DAVA…KQQT and VTDI…RREF.

As to quaternary structure, binds DNA as a dimer.

The protein localises to the cytoplasm. In terms of biological role, activates expression of the rhaBAD and rhaT operons. The sequence is that of HTH-type transcriptional activator RhaS from Escherichia coli O157:H7.